Here is a 257-residue protein sequence, read N- to C-terminus: 1-(5-phosphoribosyl)-5-[(5-phosphoribosylamino)methylideneamino] imidazole-4-carboxamide isomerase (257 aa).

Residue Asp-8 is the Proton acceptor of the active site. Residue Asp-129 is the Proton donor of the active site.

It belongs to the HisA/HisF family.

The protein resides in the cytoplasm. It catalyses the reaction 1-(5-phospho-beta-D-ribosyl)-5-[(5-phospho-beta-D-ribosylamino)methylideneamino]imidazole-4-carboxamide = 5-[(5-phospho-1-deoxy-D-ribulos-1-ylimino)methylamino]-1-(5-phospho-beta-D-ribosyl)imidazole-4-carboxamide. The protein operates within amino-acid biosynthesis; L-histidine biosynthesis; L-histidine from 5-phospho-alpha-D-ribose 1-diphosphate: step 4/9. The protein is 1-(5-phosphoribosyl)-5-[(5-phosphoribosylamino)methylideneamino] imidazole-4-carboxamide isomerase of Gloeothece citriformis (strain PCC 7424) (Cyanothece sp. (strain PCC 7424)).